Reading from the N-terminus, the 73-residue chain is Beta-defensin 10 (73 aa).

The signal sequence occupies residues 1–23 (MRTLCSLLLICCLLFSYTTPAVG). Intrachain disulfides connect Cys-37–Cys-66, Cys-44–Cys-59, and Cys-49–Cys-67.

It belongs to the beta-defensin family. Expressed in both adult and neonate brain, and very weakly in kidneys, epididymis, and testis.

The protein localises to the secreted. In terms of biological role, has antibacterial activity. In Mus musculus (Mouse), this protein is Beta-defensin 10 (Defb10).